Reading from the N-terminus, the 238-residue chain is ATP synthase subunit a (238 aa).

The next 4 membrane-spanning stretches (helical) occupy residues 17 to 37 (LSNI…AIIC), 80 to 100 (ITLL…QIAI), 112 to 132 (DPIV…YYGI), and 194 to 214 (IFVG…SIFI).

It belongs to the ATPase A chain family. In terms of assembly, F-type ATPases have 2 components, CF(1) - the catalytic core - and CF(0) - the membrane proton channel. CF(1) has five subunits: alpha(3), beta(3), gamma(1), delta(1), epsilon(1). CF(0) has three main subunits: a(1), b(2) and c(9-12). The alpha and beta chains form an alternating ring which encloses part of the gamma chain. CF(1) is attached to CF(0) by a central stalk formed by the gamma and epsilon chains, while a peripheral stalk is formed by the delta and b chains.

Its subcellular location is the cell membrane. Functionally, key component of the proton channel; it plays a direct role in the translocation of protons across the membrane. The protein is ATP synthase subunit a of Listeria welshimeri serovar 6b (strain ATCC 35897 / DSM 20650 / CCUG 15529 / CIP 8149 / NCTC 11857 / SLCC 5334 / V8).